The primary structure comprises 281 residues: Pantothenate synthetase (281 aa).

26–33 (MGSLHEGH) serves as a coordination point for ATP. His33 acts as the Proton donor in catalysis. A (R)-pantoate-binding site is contributed by Gln57. Position 57 (Gln57) interacts with beta-alanine. 144-147 (GKKD) serves as a coordination point for ATP. Residue Gln150 coordinates (R)-pantoate. Residues Ala173 and 181-184 (LSSR) contribute to the ATP site.

It belongs to the pantothenate synthetase family. As to quaternary structure, homodimer.

It localises to the cytoplasm. The catalysed reaction is (R)-pantoate + beta-alanine + ATP = (R)-pantothenate + AMP + diphosphate + H(+). The protein operates within cofactor biosynthesis; (R)-pantothenate biosynthesis; (R)-pantothenate from (R)-pantoate and beta-alanine: step 1/1. Catalyzes the condensation of pantoate with beta-alanine in an ATP-dependent reaction via a pantoyl-adenylate intermediate. The chain is Pantothenate synthetase from Methylibium petroleiphilum (strain ATCC BAA-1232 / LMG 22953 / PM1).